We begin with the raw amino-acid sequence, 907 residues long: HMG box transcription factor BBX (907 aa).

The span at 1 to 19 (MKGSNRNKDHSTEGEGDGK) shows a compositional bias: basic and acidic residues. 4 disordered regions span residues 1–24 (MKGS…PKRK), 37–80 (LDFS…EQRA), 152–185 (TTNK…PTPK), and 220–242 (TPEA…RQKS). 2 stretches are compositionally biased toward acidic residues: residues 39–52 (FSEE…EEDI) and 61–75 (DGLE…DDES). Positions 80–148 (ARRPMNAFLL…AFMKANPGYR (69 aa)) form a DNA-binding region, HMG box. Over residues 152 to 164 (TTNKPVKSPTPTV) the composition is skewed to polar residues. Ser242 is modified (phosphoserine). Lys384 participates in a covalent cross-link: Glycyl lysine isopeptide (Lys-Gly) (interchain with G-Cter in SUMO2). 3 disordered regions span residues 435 to 483 (IIED…DIES), 495 to 612 (DWGV…SERS), and 628 to 672 (TSLR…KKFK). Residues 447 to 457 (KIKKKKKKNKL) are compositionally biased toward basic residues. Phosphoserine occurs at positions 476 and 483. Composition is skewed to basic and acidic residues over residues 496–506 (WGVDKLGETPR) and 534–550 (KKVS…ESRP). A Glycyl lysine isopeptide (Lys-Gly) (interchain with G-Cter in SUMO2) cross-link involves residue Lys571. Residues 591–612 (KPEDSDCHRKTETCGSRKSERS) are compositionally biased toward basic and acidic residues. Polar residues predominate over residues 656–668 (ESWTFNQSGTSGS). Lys693 participates in a covalent cross-link: Glycyl lysine isopeptide (Lys-Gly) (interchain with G-Cter in SUMO2). Ser701 carries the phosphoserine modification. 3 disordered regions span residues 708-736 (KCVS…SGDK), 769-854 (NALS…SSTP), and 877-907 (VHRG…CADQ). Positions 723–732 (SSESTKTSKG) are enriched in low complexity. The segment covering 772–783 (SIPNTPEPTTMQ) has biased composition (polar residues). Ser789 is subject to Phosphoserine. Residues 790-801 (QKRKARKTKITH) are compositionally biased toward basic residues. A Phosphoserine modification is found at Ser811.

Its subcellular location is the nucleus. Transcription factor that is necessary for cell cycle progression from G1 to S phase. This is HMG box transcription factor BBX (Bbx) from Mus musculus (Mouse).